Consider the following 104-residue polypeptide: ATP-dependent Clp protease adapter protein ClpS (104 aa).

It belongs to the ClpS family. Binds to the N-terminal domain of the chaperone ClpA.

In terms of biological role, involved in the modulation of the specificity of the ClpAP-mediated ATP-dependent protein degradation. The sequence is that of ATP-dependent Clp protease adapter protein ClpS from Hydrogenovibrio crunogenus (strain DSM 25203 / XCL-2) (Thiomicrospira crunogena).